Here is a 356-residue protein sequence, read N- to C-terminus: Probable butyrate kinase (356 aa).

The protein belongs to the acetokinase family.

It is found in the cytoplasm. The catalysed reaction is butanoate + ATP = butanoyl phosphate + ADP. The chain is Probable butyrate kinase from Coprothermobacter proteolyticus (strain ATCC 35245 / DSM 5265 / OCM 4 / BT).